A 343-amino-acid chain; its full sequence is S-adenosylmethionine:tRNA ribosyltransferase-isomerase (343 aa).

The protein belongs to the QueA family. As to quaternary structure, monomer.

The protein resides in the cytoplasm. The catalysed reaction is 7-aminomethyl-7-carbaguanosine(34) in tRNA + S-adenosyl-L-methionine = epoxyqueuosine(34) in tRNA + adenine + L-methionine + 2 H(+). It functions in the pathway tRNA modification; tRNA-queuosine biosynthesis. Transfers and isomerizes the ribose moiety from AdoMet to the 7-aminomethyl group of 7-deazaguanine (preQ1-tRNA) to give epoxyqueuosine (oQ-tRNA). This is S-adenosylmethionine:tRNA ribosyltransferase-isomerase from Borreliella burgdorferi (strain ATCC 35210 / DSM 4680 / CIP 102532 / B31) (Borrelia burgdorferi).